An 800-amino-acid polypeptide reads, in one-letter code: DNA mismatch repair protein MutS (800 aa).

Residue 616 to 623 (GPNMGGKS) participates in ATP binding.

This sequence belongs to the DNA mismatch repair MutS family.

In terms of biological role, this protein is involved in the repair of mismatches in DNA. It is possible that it carries out the mismatch recognition step. This protein has a weak ATPase activity. The chain is DNA mismatch repair protein MutS from Buchnera aphidicola subsp. Baizongia pistaciae (strain Bp).